We begin with the raw amino-acid sequence, 278 residues long: Non-haem bromoperoxidase BPO-A2 (278 aa).

In terms of domain architecture, AB hydrolase-1 spans 26-264 (PVVLIHGFPL…GAPHGLLWTH (239 aa)). Catalysis depends on residues S99, D229, and H258.

The protein belongs to the AB hydrolase superfamily. Bacterial non-heme haloperoxidase / perhydrolase family. Homotrimer.

In terms of biological role, may be a chlorinating enzyme involved in 7-chlorotetracycline biosynthesis. The chain is Non-haem bromoperoxidase BPO-A2 (bpoA2) from Kitasatospora aureofaciens (Streptomyces aureofaciens).